Consider the following 27-residue polypeptide: Cupiennin-3a (27 aa).

E27 is subject to Glutamic acid 1-amide.

Expressed by the venom gland.

The protein localises to the secreted. The sequence is that of Cupiennin-3a from Cupiennius salei (American wandering spider).